The chain runs to 737 residues: Genome polyprotein (737 aa).

S2 is subject to N-acetylserine; by host. The segment at 2–23 (STNPKPQRKTKRNTNRRPQDVK) is interaction with STAT1. The tract at residues 2 to 58 (STNPKPQRKTKRNTNRRPQDVKFPGGGQIVGGVYLLPRRGPRLGVRATRKTSERSQP) is interaction with EIF2AK2/PKR. The tract at residues 2–59 (STNPKPQRKTKRNTNRRPQDVKFPGGGQIVGGVYLLPRRGPRLGVRATRKTSERSQPR) is interaction with DDX3X. Residues 2–75 (STNPKPQRKT…PKDRRSTGKS (74 aa)) are disordered. Topologically, residues 2 to 168 (STNPKPQRKT…EDGVNYATGN (167 aa)) are cytoplasmic. 2 short sequence motifs (nuclear localization signal) span residues 5–13 (PKPQRKTKR) and 38–43 (PRRGPR). The segment covering 7–16 (PQRKTKRNTN) has biased composition (basic residues). Positions 32–47 (GGVYLLPRRGPRLGVR) are enriched in low complexity. A Phosphoserine; by host modification is found at S53. 2 short sequence motifs (nuclear localization signal) span residues 58-64 (PRGRRQP) and 66-71 (PKDRRS). S99 and S116 each carry phosphoserine; by host. Residues 112 to 152 (PRHRSRNVGKVIDTLTCGFADLMGYIPVVGAPLGGVARALA) form an important for endoplasmic reticulum and mitochondrial localization region. Residues 122–173 (VIDTLTCGFADLMGYIPVVGAPLGGVARALAHGVRVLEDGVNYATGNLPGCS) are interaction with APOA2. An important for lipid droplets localization region spans residues 164–167 (YATG). Residues 169 to 189 (LPGCSFSIFLLALLSCITVPV) traverse the membrane as a helical segment. The propeptide at 178-191 (LLALLSCITVPVSA) is ER anchor for the core protein, removed in mature form by host signal peptidase. Over 190-358 (SAVQVKNTSN…SGAHWGVMFG (169 aa)) the chain is Lumenal. 3 N-linked (GlcNAc...) asparagine; by host glycosylation sites follow: N196, N209, and N234. The tract at residues 265–296 (VVVSATLCSALYVGDLCGGVMLAAQMFIVSPQ) is important for fusion. An N-linked (GlcNAc...) asparagine; by host glycan is attached at N305. Residues 359-379 (LAYFSMQGAWAKVVVILLLAA) traverse the membrane as a helical segment. At 380–729 (GVDANTRTVA…WEWVVLLFLL (350 aa)) the chain is on the lumenal side. The HVR1 stretch occupies residues 385–411 (TRTVAGSAAATTRGFTSMFSSGSKQNL). N-linked (GlcNAc...) (high mannose) asparagine; by host glycosylation is found at N417, N423, N430, and N448. 4 cysteine pairs are disulfide-bonded: C429–C554, C452–C459, C488–C496, and C505–C510. The tract at residues 474 to 481 (YEDNVTNP) is HVR2. The segment at 482-495 (EDMRPYCWHYPPKP) is CD81-binding 1. An N-linked (GlcNAc...) asparagine; by host glycan is attached at N542. A CD81-binding 2 region spans residues 546 to 553 (PPRGSWFG). A glycan (N-linked (GlcNAc...) (high mannose) asparagine; by host) is linked at N558. 4 disulfide bridges follow: C566–C571, C585–C589, C601–C624, and C611–C648. N627 and N649 each carry an N-linked (GlcNAc...) (high mannose) asparagine; by host glycan. A disulfide bond links C656 and C681. A PKR/eIF2-alpha phosphorylation homology domain (PePHD) region spans residues 664–675 (SQLSPLLHSTTE). A helical transmembrane segment spans residues 730–737 (LADARVCA).

Belongs to the hepacivirus polyprotein family. Homooligomer. Interacts with E1 (via C-terminus). Interacts with the non-structural protein 5A. Interacts (via N-terminus) with host STAT1 (via SH2 domain); this interaction results in decreased STAT1 phosphorylation and ubiquitin-mediated proteasome-dependent STAT1 degradation, leading to decreased IFN-stimulated gene transcription. Interacts with host STAT3; this interaction constitutively activates STAT3. Interacts with host LTBR receptor. Interacts with host TNFRSF1A receptor and possibly induces apoptosis. Interacts with host HNRPK. Interacts with host YWHAE. Interacts with host UBE3A/E6AP. Interacts with host DDX3X. Interacts with host APOA2. Interacts with host RXRA protein. Interacts with host SP110 isoform 3/Sp110b; this interaction sequesters the transcriptional corepressor SP110 away from the nucleus. Interacts with host CREB3 nuclear transcription protein; this interaction triggers cell transformation. Interacts with host ACY3. Interacts with host C1QR1. Interacts with host RBM24; this interaction, which enhances the interaction of the mature core protein with 5'-UTR, may inhibit viral translation and favor replication. Interacts with host EIF2AK2/PKR; this interaction induces the autophosphorylation of EIF2AK2. Part of the viral assembly initiation complex composed of NS2, E1, E2, NS3, NS4A, NS5A and the mature core protein. In terms of assembly, forms a heterodimer with envelope glycoprotein E2. Interacts with mature core protein. Interacts with protease NS2. The heterodimer E1/E2 interacts with host CLDN1; this interaction plays a role in viral entry into host cell. Interacts with host SPSB2 (via C-terminus). Part of the viral assembly initiation complex composed of NS2, E1, E2, NS3, NS4A, NS5A and the mature core protein. As to quaternary structure, forms a heterodimer with envelope glycoprotein E1. Interacts with host CD81 and SCARB1 receptors; these interactions play a role in viral entry into host cell. Interacts with host EIF2AK2/PKR; this interaction inhibits EIF2AK2 and probably allows the virus to evade the innate immune response. Interacts with host CD209/DC-SIGN and CLEC4M/DC-SIGNR. Interact with host SPCS1; this interaction is essential for viral particle assembly. Interacts with protease NS2. The heterodimer E1/E2 interacts with host CLDN1; this interaction plays a role in viral entry into host cell. Part of the viral assembly initiation complex composed of NS2, E1, E2, NS3, NS4A, NS5A and the mature core protein. In terms of processing, specific enzymatic cleavages in vivo yield mature proteins. The structural proteins, core, E1, E2 and p7 are produced by proteolytic processing by host signal peptidases. The core protein precursor is synthesized as a 23 kDa, which is retained in the ER membrane through the hydrophobic signal peptide. Cleavage by the signal peptidase releases the 21 kDa mature core protein. The cleavage of the core protein precursor occurs between aminoacids 176 and 188 but the exact cleavage site is not known. Some degraded forms of the core protein appear as well during the course of infection. The other proteins (p7, NS2, NS3, NS4A, NS4B, NS5A and NS5B) are cleaved by the viral proteases. Autoprocessing between NS2 and NS3 is mediated by the NS2 cysteine protease catalytic domain and regulated by the NS3 N-terminal domain. Phosphorylated by host PKC and PKA. Post-translationally, ubiquitinated; mediated by UBE3A and leading to core protein subsequent proteasomal degradation. In terms of processing, highly N-glycosylated.

Its subcellular location is the host endoplasmic reticulum membrane. It is found in the host mitochondrion membrane. It localises to the virion. The protein resides in the host cytoplasm. The protein localises to the host nucleus. Its subcellular location is the host lipid droplet. It is found in the virion membrane. In terms of biological role, packages viral RNA to form a viral nucleocapsid, and promotes virion budding. Participates in the viral particle production as a result of its interaction with the non-structural protein 5A. Binds RNA and may function as a RNA chaperone to induce the RNA structural rearrangements taking place during virus replication. Modulates viral translation initiation by interacting with viral IRES and 40S ribosomal subunit. Affects various cell signaling pathways, host immunity and lipid metabolism. Prevents the establishment of cellular antiviral state by blocking the interferon-alpha/beta (IFN-alpha/beta) and IFN-gamma signaling pathways and by blocking the formation of phosphorylated STAT1 and promoting ubiquitin-mediated proteasome-dependent degradation of STAT1. Activates STAT3 leading to cellular transformation. Regulates the activity of cellular genes, including c-myc and c-fos. May repress the promoter of p53, and sequester CREB3 and SP110 isoform 3/Sp110b in the cytoplasm. Represses cell cycle negative regulating factor CDKN1A, thereby interrupting an important check point of normal cell cycle regulation. Targets transcription factors involved in the regulation of inflammatory responses and in the immune response: suppresses TNF-induced NF-kappa-B activation, and activates AP-1. Binds to dendritic cells (DCs) via C1QR1, resulting in down-regulation of T-lymphocytes proliferation. Alters lipid metabolism by interacting with hepatocellular proteins involved in lipid accumulation and storage. Induces up-regulation of FAS promoter activity, and thereby contributes to the increased triglyceride accumulation in hepatocytes (steatosis). Functionally, forms a heterodimer with envelope glycoprotein E2, which mediates virus attachment to the host cell, virion internalization through clathrin-dependent endocytosis and fusion with host membrane. Fusion with the host cell is most likely mediated by both E1 and E2, through conformational rearrangements of the heterodimer required for fusion rather than a classical class II fusion mechanism. E1/E2 heterodimer binds host apolipoproteins such as APOB and ApoE thereby forming a lipo-viro-particle (LVP). APOE associated to the LVP allows the initial virus attachment to cell surface receptors such as the heparan sulfate proteoglycans (HSPGs), syndecan-1 (SDC1), syndecan-1 (SDC2), the low-density lipoprotein receptor (LDLR) and scavenger receptor class B type I (SCARB1). The cholesterol transfer activity of SCARB1 allows E2 exposure and binding of E2 to SCARB1 and the tetraspanin CD81. E1/E2 heterodimer binding on CD81 activates the epithelial growth factor receptor (EGFR) signaling pathway. Diffusion of the complex E1-E2-EGFR-SCARB1-CD81 to the cell lateral membrane allows further interaction with Claudin 1 (CLDN1) and occludin (OCLN) to finally trigger HCV entry. Its function is as follows. Forms a heterodimer with envelope glycoprotein E1, which mediates virus attachment to the host cell, virion internalization through clathrin-dependent endocytosis and fusion with host membrane. Fusion with the host cell is most likely mediated by both E1 and E2, through conformational rearrangements of the heterodimer required for fusion rather than a classical class II fusion mechanism. The interaction between envelope glycoprotein E2 and host apolipoprotein E/APOE allows the proper assembly, maturation and infectivity of the viral particles. This interaction is probably promoted via the up-regulation of cellular autophagy by the virus. E1/E2 heterodimer binds host apolipoproteins such as APOB and APOE thereby forming a lipo-viro-particle (LVP). APOE associated to the LVP allows the initial virus attachment to cell surface receptors such as the heparan sulfate proteoglycans (HSPGs), syndecan-1 (SDC1), syndecan-1 (SDC2), the low-density lipoprotein receptor (LDLR) and scavenger receptor class B type I (SCARB1). The cholesterol transfer activity of SCARB1 allows E2 exposure and binding of E2 to SCARB1 and the tetraspanin CD81. E1/E2 heterodimer binding on CD81 activates the epithelial growth factor receptor (EGFR) signaling pathway. Diffusion of the complex E1-E2-EGFR-SCARB1-CD81 to the cell lateral membrane allows further interaction with Claudin 1 (CLDN1) and occludin (OCLN) to finally trigger HCV entry. Inhibits host EIF2AK2/PKR activation, preventing the establishment of an antiviral state. Viral ligand for CD209/DC-SIGN and CLEC4M/DC-SIGNR, which are respectively found on dendritic cells (DCs), and on liver sinusoidal endothelial cells and macrophage-like cells of lymph node sinuses. These interactions allow the capture of circulating HCV particles by these cells and subsequent facilitated transmission to permissive cells such as hepatocytes and lymphocyte subpopulations. This Homo sapiens (Human) protein is Genome polyprotein.